A 180-amino-acid polypeptide reads, in one-letter code: Insulin-like growth factor 2 (180 aa).

Positions 1–24 (MGIPVGKSMLVLLISLAFALCCIA) are cleaved as a signal peptide. Residues 25–52 (AYRPSETLCGGELVDTLQFVCSDRGFYF) form a b region. 3 disulfide bridges follow: C33/C71, C45/C84, and C70/C75. A c region spans residues 53–64 (SRPSSRANRRSR). An a region spans residues 65–85 (GIVEECCFRSCDLALLETYCA). A d region spans residues 86 to 91 (TPAKSE). A propeptide spans 92–180 (RDVSTSQAVL…ASSEMSSNHQ (89 aa)) (e peptide). The disordered stretch occupies residues 160 to 180 (VLPPKDPAHGGASSEMSSNHQ).

This sequence belongs to the insulin family. In terms of assembly, interacts with MYORG; this interaction is required for IGF2 secretion. Interacts with integrins ITGAV:ITGB3 and ITGA6:ITGB4; integrin-binding is required for IGF2 signaling. Interacts with IGFBP2. Post-translationally, proteolytically processed by PCSK4, proIGF2 is cleaved at Arg-128 and Arg-92 to generate big-IGF2 and mature IGF2.

It is found in the secreted. Functionally, the insulin-like growth factors possess growth-promoting activity. Major fetal growth hormone in mammals. Plays a key role in regulating fetoplacental development. IGF2 is influenced by placental lactogen. Also involved in tissue differentiation. In adults, involved in glucose metabolism in adipose tissue, skeletal muscle and liver. Acts as a ligand for integrin which is required for IGF2 signaling. Positively regulates myogenic transcription factor MYOD1 function by facilitating the recruitment of transcriptional coactivators, thereby controlling muscle terminal differentiation. Inhibits myoblast differentiation and modulates metabolism via increasing the mitochondrial respiration rate. In terms of biological role, preptin undergoes glucose-mediated co-secretion with insulin, and acts as a physiological amplifier of glucose-mediated insulin secretion. Exhibits osteogenic properties by increasing osteoblast mitogenic activity through phosphoactivation of MAPK1 and MAPK3. The sequence is that of Insulin-like growth factor 2 from Rattus norvegicus (Rat).